The primary structure comprises 360 residues: Protein MGF 360-1L (360 aa).

Belongs to the asfivirus MGF 360 family.

In terms of biological role, plays a role in virus cell tropism, and may be required for efficient virus replication in macrophages. The polypeptide is Protein MGF 360-1L (Ornithodoros (relapsing fever ticks)).